Reading from the N-terminus, the 537-residue chain is Quadr-hydrophobin (537 aa).

The first 17 residues, 1–17 (MKFITVAAALFASTSLA), serve as a signal peptide directing secretion. Hydrophobin regions lie at residues 63-199 (GGNP…QNPI), 200-299 (GGNP…ENPT), 300-421 (GGNP…QDPL), and 422-537 (GGNP…RAII). N-linked (GlcNAc...) asparagine glycosylation is found at asparagine 70 and asparagine 113. 16 disulfides stabilise this stretch: cysteine 134-cysteine 183, cysteine 144-cysteine 174, cysteine 145-cysteine 157, cysteine 184-cysteine 195, cysteine 234-cysteine 283, cysteine 244-cysteine 274, cysteine 245-cysteine 257, cysteine 284-cysteine 295, cysteine 356-cysteine 405, cysteine 366-cysteine 396, cysteine 367-cysteine 379, cysteine 406-cysteine 417, cysteine 471-cysteine 520, cysteine 481-cysteine 511, cysteine 482-cysteine 494, and cysteine 521-cysteine 532.

The protein belongs to the cerato-ulmin hydrophobin family. In terms of assembly, homotetramer. Further self-assembles to form highly ordered films at water-air interfaces through intermolecular interactions.

It is found in the secreted. The protein resides in the cell wall. Its function is as follows. Aerial growth, conidiation, and dispersal of filamentous fungi in the environment rely upon a capability of their secreting small amphipathic proteins called hydrophobins (HPBs) with low sequence identity. Class I can self-assemble into an outermost layer of rodlet bundles on aerial cell surfaces, conferring cellular hydrophobicity that supports fungal growth, development and dispersal; whereas Class II form highly ordered films at water-air interfaces through intermolecular interactions but contribute nothing to the rodlet structure. The polypeptide is Quadr-hydrophobin (Cordyceps militaris (Caterpillar fungus)).